The primary structure comprises 153 residues: Large ribosomal subunit protein uL15 (153 aa).

Residues 21–41 (RGIGSGKGKTGGRGIKGQKSR) are disordered. Residues 23-35 (IGSGKGKTGGRGI) show a composition bias toward gly residues.

It belongs to the universal ribosomal protein uL15 family. As to quaternary structure, part of the 50S ribosomal subunit.

Functionally, binds to the 23S rRNA. The polypeptide is Large ribosomal subunit protein uL15 (Rickettsia rickettsii (strain Iowa)).